We begin with the raw amino-acid sequence, 481 residues long: F-box/FBD/LRR-repeat protein At5g18770 (481 aa).

Residues 23-69 (EDMISALPDHLLCHILIFLSTDESVLTSVLSSRWRNLWKWVPRLDLN) form the F-box domain. 7 LRR repeats span residues 126–153 (KPNV…TLSA), 159–185 (CLKL…YLED), 186–211 (VVFP…KLSL), 214–234 (DDVV…TLKR), 236–261 (VPVY…SLID), 289–314 (DELS…TISW), and 340–368 (ATMS…HFTL). The FBD domain occupies 378 to 430 (VITGFSRVLPRCLVFSLESVEMESPITEKATELKLVRYFLENSATLKKLVLLL).

This Arabidopsis thaliana (Mouse-ear cress) protein is F-box/FBD/LRR-repeat protein At5g18770.